Here is a 239-residue protein sequence, read N- to C-terminus: tRNA (guanine-N(1)-)-methyltransferase (239 aa).

Residues G112 and 132-137 contribute to the S-adenosyl-L-methionine site; that span reads IGDYVL.

The protein belongs to the RNA methyltransferase TrmD family. Homodimer.

It is found in the cytoplasm. The enzyme catalyses guanosine(37) in tRNA + S-adenosyl-L-methionine = N(1)-methylguanosine(37) in tRNA + S-adenosyl-L-homocysteine + H(+). In terms of biological role, specifically methylates guanosine-37 in various tRNAs. This is tRNA (guanine-N(1)-)-methyltransferase from Rhodospirillum rubrum (strain ATCC 11170 / ATH 1.1.1 / DSM 467 / LMG 4362 / NCIMB 8255 / S1).